The sequence spans 295 residues: uncharacterized protein (295 aa).

NAD(+) is bound by residues 11-25 (GYIG…MAKR) and Thr-101. Residue Lys-176 is part of the active site. Lys-252 is an NAD(+) binding site.

The protein belongs to the HIBADH-related family.

This is an uncharacterized protein from Mycobacterium tuberculosis (strain CDC 1551 / Oshkosh).